We begin with the raw amino-acid sequence, 316 residues long: Thymidylate synthase (316 aa).

Residues Arg-23 and 178-179 (RR) each bind dUMP. Cys-198 serves as the catalytic Nucleophile. DUMP contacts are provided by residues 218-221 (RSGD), Asn-229, and 259-261 (HIY). (6R)-5,10-methylene-5,6,7,8-tetrahydrofolate is bound at residue Asp-221. Ala-315 is a binding site for (6R)-5,10-methylene-5,6,7,8-tetrahydrofolate.

The protein belongs to the thymidylate synthase family. Bacterial-type ThyA subfamily. In terms of assembly, homodimer.

The protein localises to the cytoplasm. It catalyses the reaction dUMP + (6R)-5,10-methylene-5,6,7,8-tetrahydrofolate = 7,8-dihydrofolate + dTMP. Its pathway is pyrimidine metabolism; dTTP biosynthesis. In terms of biological role, catalyzes the reductive methylation of 2'-deoxyuridine-5'-monophosphate (dUMP) to 2'-deoxythymidine-5'-monophosphate (dTMP) while utilizing 5,10-methylenetetrahydrofolate (mTHF) as the methyl donor and reductant in the reaction, yielding dihydrofolate (DHF) as a by-product. This enzymatic reaction provides an intracellular de novo source of dTMP, an essential precursor for DNA biosynthesis. In Pediococcus pentosaceus (strain ATCC 25745 / CCUG 21536 / LMG 10740 / 183-1w), this protein is Thymidylate synthase.